A 9702-amino-acid chain; its full sequence is Nonribosomal peptide synthetase ungA (9702 aa).

An adenylation 1 region spans residues 248 to 647 (EQAQLRPHAP…ARKDTQVKIR (400 aa)). In terms of domain architecture, Carrier 1 spans 775–852 (APQTEMEYRL…MARAAQEKQT (78 aa)). Residue Ser-812 is modified to O-(pantetheine 4'-phosphoryl)serine. Residues 891–1288 (DILPCTPLQE…EAVLRHVCSQ (398 aa)) form a condensation 1 region. The tract at residues 1330 to 1730 (QRTQQQPDAP…GRKDTQVKIR (401 aa)) is adenylation 2. In terms of domain architecture, Carrier 2 spans 1857-1933 (LPQSPMEKSL…RLARREIQTD (77 aa)). Ser-1894 carries the O-(pantetheine 4'-phosphoryl)serine modification. An epimerization 1 region spans residues 1946–2374 (PFALSPIQQF…ERALEGTAVQ (429 aa)). Residues 2414–2842 (EDIYPCSPLQ…LDTAILSPQD (429 aa)) are condensation 2. Positions 2868-3267 (QVERQPDALA…GRKDTQVKIR (400 aa)) are adenylation 3. One can recognise a Carrier 3 domain in the interval 3397–3473 (APTTEMERHL…EMSQVAKLGS (77 aa)). An O-(pantetheine 4'-phosphoryl)serine modification is found at Ser-3434. Residues 3512–3920 (EDVFPCTPLQ…LLCDASHHQS (409 aa)) are condensation 3. Positions 3957 to 4361 (KQTQRRSAAQ…GRKDAQVKIR (405 aa)) are adenylation 4. The Carrier 4 domain occupies 4491-4568 (PPTTDLERQI…LALSVSAAVD (78 aa)). O-(pantetheine 4'-phosphoryl)serine is present on Ser-4528. The interval 4583–5013 (ALSPIQQMFA…QAAAQALPLL (431 aa)) is epimerization 2. A condensation 4 region spans residues 5049–5474 (VEDIYPCSPL…ANIISHQDLE (426 aa)). The segment at 5496 to 5899 (MQQAESQPGA…GRKDNQVKIH (404 aa)) is adenylation 5. In terms of domain architecture, Carrier 5 spans 6033-6110 (TASSPEELEL…LVSHAQGNTA (78 aa)). At Ser-6070 the chain carries O-(pantetheine 4'-phosphoryl)serine. The tract at residues 6127–6551 (ELSPIQQLFF…CKSSLEAAAA (425 aa)) is epimerization 3. Residues 6593–6935 (VEDIYPCAPI…TGISVQGGAA (343 aa)) form a condensation 5 region. Positions 7047–7447 (KRPDAPAIDA…GRRDNQVKVR (401 aa)) are adenylation 6. In terms of domain architecture, Carrier 6 spans 7575 to 7655 (GPQTEVERLL…RSARTVQGHV (81 aa)). At Ser-7613 the chain carries O-(pantetheine 4'-phosphoryl)serine. An epimerization 4 region spans residues 7670 to 8106 (DLAPVQQMFA…LVTASELLMQ (437 aa)). Residues 8144–8588 (VEDIYPCSPI…EVDLSTDHDQ (445 aa)) form a condensation 6 region. The segment at 8612 to 9025 (NTVQKQPHST…GRKDSQVKIR (414 aa)) is adenylation 7. The Carrier 7 domain occupies 9158 to 9236 (SPTAPMERRL…LALLVREGDA (79 aa)). At Ser-9196 the chain carries O-(pantetheine 4'-phosphoryl)serine. The condensation 7 stretch occupies residues 9282–9629 (DVYPTTDLQN…DNLEHDPGTA (348 aa)).

It belongs to the NRP synthetase family.

It functions in the pathway secondary metabolite biosynthesis. Nonribosomal peptide synthetase; part of the gene cluster that mediates the biosynthesis of the unguisins, gamma-aminobutyric acid (GABA)-containing fungal cyclic heptapeptides with the amino acid sequence cyclo-(D-Ala1-D-Val2-L-Phe3-D-Val4-D-Ala5-D-Trp6-GABA7) for unguisin A and cyclo-(D-Ala1-D-Val2-L-Leu3-D-Val4-D-Ala5-D-Trp6-GABA7) for unguisin B. UngA is the main enzyme within the cluster which condenses the 7 residues using its respective 7 modules. The terminal condensation domain (Ct) is involved in cyclization with D-alanine and thereby releasing of unguisins A and B. The alanine racemase ungC provides D-alanine, which is then accepted by the first adenylation domain of ungA. Finally, the hydrolase ungD catalyzes the hydrolysis between the D-tryptophan and GABA residues of unguisins A and B to produce the corresponding linear peptides. The polypeptide is Nonribosomal peptide synthetase ungA (Aspergillus violaceofuscus (strain CBS 115571)).